Here is a 32-residue protein sequence, read N- to C-terminus: Dermatoxin-J3 (32 aa).

Q32 is modified (glutamine amide).

Expressed by the skin glands.

Its subcellular location is the secreted. Functionally, antimicrobial peptide. The sequence is that of Dermatoxin-J3 from Phasmahyla jandaia (Jandaia leaf frog).